A 505-amino-acid polypeptide reads, in one-letter code: Putative thymidine phosphorylase (505 aa).

The protein belongs to the thymidine/pyrimidine-nucleoside phosphorylase family. Type 2 subfamily.

It carries out the reaction thymidine + phosphate = 2-deoxy-alpha-D-ribose 1-phosphate + thymine. This is Putative thymidine phosphorylase from Tolumonas auensis (strain DSM 9187 / NBRC 110442 / TA 4).